Reading from the N-terminus, the 100-residue chain is uncharacterized protein (100 aa).

The next 2 membrane-spanning stretches (helical) occupy residues 50–70 and 75–95; these read LLIF…FSLF and DVFL…SPEV.

Its subcellular location is the membrane. This is an uncharacterized protein from Saccharomyces cerevisiae (strain ATCC 204508 / S288c) (Baker's yeast).